Reading from the N-terminus, the 460-residue chain is Proline--tRNA ligase (460 aa).

Belongs to the class-II aminoacyl-tRNA synthetase family. ProS type 3 subfamily. Homodimer.

It is found in the cytoplasm. It catalyses the reaction tRNA(Pro) + L-proline + ATP = L-prolyl-tRNA(Pro) + AMP + diphosphate. Functionally, catalyzes the attachment of proline to tRNA(Pro) in a two-step reaction: proline is first activated by ATP to form Pro-AMP and then transferred to the acceptor end of tRNA(Pro). The protein is Proline--tRNA ligase of Methanococcus maripaludis (strain C5 / ATCC BAA-1333).